We begin with the raw amino-acid sequence, 281 residues long: Probable catechol O-methyltransferase 2 (281 aa).

S-adenosyl-L-methionine is bound by residues Ile-78, Glu-100, Ser-108, Glu-127, Val-128, Ala-156, and Asp-183. Mg(2+) is bound at residue Asp-183. Lys-186 is a substrate binding site. Positions 211 and 212 each coordinate Mg(2+). Residue Asn-212 coordinates substrate.

Belongs to the class I-like SAM-binding methyltransferase superfamily. Cation-dependent O-methyltransferase family. Requires Mg(2+) as cofactor.

The protein localises to the vacuole. The catalysed reaction is a catechol + S-adenosyl-L-methionine = a guaiacol + S-adenosyl-L-homocysteine + H(+). The sequence is that of Probable catechol O-methyltransferase 2 from Schizosaccharomyces pombe (strain 972 / ATCC 24843) (Fission yeast).